The sequence spans 272 residues: Shikimate dehydrogenase (NADP(+)) (272 aa).

Shikimate-binding positions include S14 to S16 and T61. Catalysis depends on K65, which acts as the Proton acceptor. Residue E77 coordinates NADP(+). Residues N86 and D102 each contribute to the shikimate site. Residues G126 to A130, N149 to R154, and M213 contribute to the NADP(+) site. Y215 contacts shikimate. G237 is a binding site for NADP(+).

The protein belongs to the shikimate dehydrogenase family. As to quaternary structure, homodimer.

The catalysed reaction is shikimate + NADP(+) = 3-dehydroshikimate + NADPH + H(+). It functions in the pathway metabolic intermediate biosynthesis; chorismate biosynthesis; chorismate from D-erythrose 4-phosphate and phosphoenolpyruvate: step 4/7. Functionally, involved in the biosynthesis of the chorismate, which leads to the biosynthesis of aromatic amino acids. Catalyzes the reversible NADPH linked reduction of 3-dehydroshikimate (DHSA) to yield shikimate (SA). The polypeptide is Shikimate dehydrogenase (NADP(+)) (Escherichia coli O45:K1 (strain S88 / ExPEC)).